The primary structure comprises 430 residues: Serine--tRNA ligase (430 aa).

An L-serine-binding site is contributed by 237–239 (TAE). Residue 268–270 (RSE) coordinates ATP. E291 contacts L-serine. 355 to 358 (EISS) lines the ATP pocket. S391 is a binding site for L-serine.

This sequence belongs to the class-II aminoacyl-tRNA synthetase family. Type-1 seryl-tRNA synthetase subfamily. In terms of assembly, homodimer. The tRNA molecule binds across the dimer.

The protein localises to the cytoplasm. It carries out the reaction tRNA(Ser) + L-serine + ATP = L-seryl-tRNA(Ser) + AMP + diphosphate + H(+). It catalyses the reaction tRNA(Sec) + L-serine + ATP = L-seryl-tRNA(Sec) + AMP + diphosphate + H(+). It participates in aminoacyl-tRNA biosynthesis; selenocysteinyl-tRNA(Sec) biosynthesis; L-seryl-tRNA(Sec) from L-serine and tRNA(Sec): step 1/1. Its function is as follows. Catalyzes the attachment of serine to tRNA(Ser). Is also able to aminoacylate tRNA(Sec) with serine, to form the misacylated tRNA L-seryl-tRNA(Sec), which will be further converted into selenocysteinyl-tRNA(Sec). This chain is Serine--tRNA ligase, found in Klebsiella pneumoniae subsp. pneumoniae (strain ATCC 700721 / MGH 78578).